Reading from the N-terminus, the 212-residue chain is ER lumen protein-retaining receptor 1 (212 aa).

The Lumenal portion of the chain corresponds to 1-4; the sequence is MNLF. The chain crosses the membrane as a helical span at residues 5–24; that stretch reads RFLGDLSHLLAIILLLLKIW. The Cytoplasmic portion of the chain corresponds to 25–32; the sequence is KSRSCAGI. Residues 33–52 form a helical membrane-spanning segment; sequence SGKSQVLFAVVFTARYLDLF. The segment at 47–48 is interaction with the K-D-E-L motif on target proteins; that stretch reads RY. The Lumenal segment spans residues 53–58; that stretch reads TNYISL. The helical transmembrane segment at 59 to 79 threads the bilayer; it reads YNTCMKVVYIACSFTTVWMIY. Topologically, residues 80-92 are cytoplasmic; that stretch reads SKFKATYDGNHDT. A helical transmembrane segment spans residues 93–110; the sequence is FRVEFLVVPTAVLAFLVN. The Lumenal segment spans residues 111–116; that stretch reads HDFTPL. A helical transmembrane segment spans residues 117–135; the sequence is EILWTFSIYLESVAILPQL. At 136-149 the chain is on the cytoplasmic side; the sequence is FMVSKTGEAETITS. A helical membrane pass occupies residues 150–168; the sequence is HYLFALGVYRTLYLFNWIW. Residues 159–169 form an interaction with the K-D-E-L motif on target proteins region; sequence RTLYLFNWIWR. Topologically, residues 169-178 are lumenal; that stretch reads RYHFEGFFDL. Residues 179 to 199 traverse the membrane as a helical segment; it reads IAIVAGLVQTVLYCDFFYLYI. The Cytoplasmic portion of the chain corresponds to 200 to 212; it reads TKVLKGKKLSLPA. The tract at residues 204-207 is important for recycling of cargo proteins with the sequence motif K-D-E-L from the Golgi to the endoplasmic reticulum; sequence KGKK. S209 is modified (phosphoserine; by PKA).

The protein belongs to the ERD2 family. Upon ligand binding the receptor oligomerizes and interacts with components of the transport machinery such as ARFGAP1 and ARF1. Post-translationally, phosphorylation by PKA at Ser-209 is required for endoplasmic reticulum retention function.

The protein localises to the golgi apparatus membrane. It is found in the cytoplasmic vesicle. The protein resides in the COPI-coated vesicle membrane. It localises to the endoplasmic reticulum membrane. Its subcellular location is the endoplasmic reticulum-Golgi intermediate compartment membrane. Receptor for the C-terminal sequence motif K-D-E-L that is present on endoplasmic reticulum resident proteins and that mediates their recycling from the Golgi back to the endoplasmic reticulum. This chain is ER lumen protein-retaining receptor 1 (Kdelr1), found in Rattus norvegicus (Rat).